The primary structure comprises 593 residues: AT-rich interactive domain-containing protein 3A (593 aa).

The disordered stretch occupies residues 14 to 222; sequence QQRARQELEA…PQLQPPDHGD (209 aa). Over residues 41–53 the composition is skewed to basic and acidic residues; the sequence is AAPDEDREPESAR. Residues 54 to 87 are compositionally biased toward low complexity; sequence MQRAQMAALAAMRAAAAGLGHPASPGGSEDGPPG. Serine 77, serine 81, and serine 88 each carry phosphoserine. Threonine 98 carries the post-translational modification Phosphothreonine. Residues serine 101 and serine 119 each carry the phosphoserine modification. Over residues 104–127 the composition is skewed to basic and acidic residues; it reads RGREGPGEEHFEDMASDEDMKPKW. The segment at 119 to 156 is acidic; it reads SDEDMKPKWEEEEMEEDLGEDEEEEEEDYEDEEEEEDE. Over residues 128–158 the composition is skewed to acidic residues; sequence EEEEMEEDLGEDEEEEEEDYEDEEEEEDEEG. In terms of domain architecture, ARID spans 238–330; the sequence is DPKRKEFLDD…YLYPYECEKR (93 aa). Phosphoserine is present on residues serine 353 and serine 362. Glycyl lysine isopeptide (Lys-Gly) (interchain with G-Cter in SUMO2) cross-links involve residues lysine 398, lysine 399, lysine 452, and lysine 462. The region spanning 444–541 is the REKLES domain; it reads AALEQLREKL…GVLFAQPPAP (98 aa). The important for nuclear localization stretch occupies residues 445–488; it reads ALEQLREKLESAEPPEKKMALVADEQQRLMQRALQQNFLAMAAQ. The interval 490-513 is homodimerization; that stretch reads PMSIRINSQASESRQDSAVNLTGT. Disordered regions lie at residues 497 to 516 and 539 to 593; these read SQAS…TNGS and PAPT…NSLP. An important for cytoplasmic localization region spans residues 537 to 557; the sequence is QPPAPTPTSAPNKGGGGGGGS. A compositionally biased stretch (gly residues) spans 549-576; that stretch reads KGGGGGGGSSSNAGGRGGNTGTSGGQAG. A compositionally biased stretch (low complexity) spans 580 to 593; the sequence is LSTPSTSTSNNSLP.

As to quaternary structure, homodimer. Heterodimer with ARID3B. Interacts with E2F1. Interacts with GTF2I and BTK. In terms of tissue distribution, widely expressed, with highest expression in skeletal muscle, thalamus, and colon.

The protein resides in the nucleus. It is found in the cytoplasm. Transcription factor which may be involved in the control of cell cycle progression by the RB1/E2F1 pathway and in B-cell differentiation. The polypeptide is AT-rich interactive domain-containing protein 3A (ARID3A) (Homo sapiens (Human)).